Reading from the N-terminus, the 658-residue chain is Non-reducing end beta-L-arabinofuranosidase (658 aa).

Beta-L-arabinofuranose contacts are provided by residues H142, 192-194 (DGH), H270, and E322. Catalysis depends on E322, which acts as the Proton donor/acceptor. The Zn(2+) site is built by E338, C340, C417, and C418. C417 serves as the catalytic Nucleophile; S-glycosyl-cysteine intermediate.

It belongs to the glycosyl hydrolase 127 family. Homodimer in solution. It depends on Zn(2+) as a cofactor.

The catalysed reaction is beta-L-arabinofuranosyl-(1-&gt;2)-beta-L-arabinofuranose + H2O = 2 beta-L-arabinofuranose. Its activity is regulated as follows. Strongly inhibited in the presence of thiol modifiers, suggesting a crucial role for cysteine residues in catalysis. Slightly inhibited by EDTA. Functionally, beta-L-arabinofuranosidase that removes the beta-L-arabinofuranose residue from the non-reducing end of various substrates, including beta-L-arabinofuranosyl-hydroxyproline (Ara-Hyp), Ara-beta-1,2-Ara-beta-Hyp (Ara(2)-Hyp), Ara-beta-1,2-Ara-beta-1,2-Ara-beta-Hyp (Ara(3)-Hyp), and beta-L-arabinofuranosyl-(1-&gt;2)-1-O-methyl-beta-L-arabinofuranose. In the presence of 1-alkanols, shows transglycosylation activity, retaining the anomeric configuration of the arabinofuranose residue. The sequence is that of Non-reducing end beta-L-arabinofuranosidase from Bifidobacterium longum subsp. longum (strain ATCC 15707 / DSM 20219 / JCM 1217 / NCTC 11818 / E194b).